A 323-amino-acid chain; its full sequence is Peridinin-chlorophyll a-binding protein 3 (323 aa).

2 repeat units span residues 1–173 (DGIA…RYVP) and 174–323 (DGPV…SAVV).

Homotrimer.

It is found in the plastid. The protein localises to the chloroplast. Its function is as follows. Water-soluble antenna for capture of solar energy in the blue-green range. Peridinin is an asymmetric carotenoid. The polypeptide is Peridinin-chlorophyll a-binding protein 3 (Amphidinium carterae (Dinoflagellate)).